Consider the following 251-residue polypeptide: Triosephosphate isomerase (251 aa).

9-11 (NWK) is a substrate binding site. His-96 functions as the Electrophile in the catalytic mechanism. Glu-168 serves as the catalytic Proton acceptor. Substrate is bound by residues Gly-174, Ser-214, and 235–236 (GG).

It belongs to the triosephosphate isomerase family. Homodimer.

It localises to the cytoplasm. It carries out the reaction D-glyceraldehyde 3-phosphate = dihydroxyacetone phosphate. It functions in the pathway carbohydrate biosynthesis; gluconeogenesis. The protein operates within carbohydrate degradation; glycolysis; D-glyceraldehyde 3-phosphate from glycerone phosphate: step 1/1. Its function is as follows. Involved in the gluconeogenesis. Catalyzes stereospecifically the conversion of dihydroxyacetone phosphate (DHAP) to D-glyceraldehyde-3-phosphate (G3P). The sequence is that of Triosephosphate isomerase from Cytophaga hutchinsonii (strain ATCC 33406 / DSM 1761 / CIP 103989 / NBRC 15051 / NCIMB 9469 / D465).